The sequence spans 130 residues: Small ribosomal subunit protein uS11 (130 aa).

Belongs to the universal ribosomal protein uS11 family. As to quaternary structure, part of the 30S ribosomal subunit. Interacts with proteins S7 and S18. Binds to IF-3.

In terms of biological role, located on the platform of the 30S subunit, it bridges several disparate RNA helices of the 16S rRNA. Forms part of the Shine-Dalgarno cleft in the 70S ribosome. In Latilactobacillus sakei subsp. sakei (strain 23K) (Lactobacillus sakei subsp. sakei), this protein is Small ribosomal subunit protein uS11.